The chain runs to 229 residues: GTP cyclohydrolase 1 (229 aa).

3 residues coordinate Zn(2+): cysteine 116, histidine 119, and cysteine 187.

This sequence belongs to the GTP cyclohydrolase I family. Toroid-shaped homodecamer, composed of two pentamers of five dimers.

The catalysed reaction is GTP + H2O = 7,8-dihydroneopterin 3'-triphosphate + formate + H(+). Its pathway is cofactor biosynthesis; 7,8-dihydroneopterin triphosphate biosynthesis; 7,8-dihydroneopterin triphosphate from GTP: step 1/1. In Synechococcus sp. (strain JA-3-3Ab) (Cyanobacteria bacterium Yellowstone A-Prime), this protein is GTP cyclohydrolase 1.